The sequence spans 516 residues: (R)-citramalate synthase CimA (516 aa).

One can recognise a Pyruvate carboxyltransferase domain in the interval 8-269 (LEILDVTLRD…KTNINEIAIT (262 aa)). Arg16 (proton donor) is an active-site residue. Residues 16 to 17 (RD) and Tyr144 each bind pyruvate. Asp17 is a Mn(2+) binding site. Glu146 functions as the Proton acceptor in the catalytic mechanism. Residue Thr179 participates in pyruvate binding. Residues His207 and His209 each coordinate Mn(2+).

It belongs to the alpha-IPM synthase/homocitrate synthase family. As to quaternary structure, homodimer. The cofactor is Mn(2+).

The catalysed reaction is pyruvate + acetyl-CoA + H2O = (3R)-citramalate + CoA + H(+). It participates in amino-acid biosynthesis; L-isoleucine biosynthesis; 2-oxobutanoate from pyruvate: step 1/3. With respect to regulation, regulated by the end-product isoleucine via a feedback inhibition. The binding of isoleucine has inhibitory effects on the binding of both pyruvate and acetyl-CoA. May act via conformational change of the dimer interface of the regulatory domain, leading to inhibition of the catalytic reaction. Its function is as follows. Catalyzes the condensation of pyruvate and acetyl-coenzyme A to form (R)-citramalate. Shows strict substrate specificity for pyruvate. Cannot use alpha-ketoisovalerate, alpha-ketobutyrate, alpha-ketoisocaproate, alpha-ketoglutarate or glyoxylate. The chain is (R)-citramalate synthase CimA from Leptospira interrogans serogroup Icterohaemorrhagiae serovar Lai (strain 56601).